The sequence spans 387 residues: 3-hydroxy-D-aspartate aldolase (387 aa).

An N6-(pyridoxal phosphate)lysine modification is found at Lys-62. Position 85 (Gln-85) interacts with pyridoxal 5'-phosphate. Residues 199-228 (HGQLRGPQGQAGRRHCPGERGRGRAGGRGL) are disordered. Residues Thr-238, 256-257 (GS), and Tyr-265 each bind pyridoxal 5'-phosphate. Mg(2+) is bound by residues His-355 and Asp-357.

Belongs to the DSD1 family. Homodimer. The cofactor is pyridoxal 5'-phosphate. Mn(2+) serves as cofactor. It depends on Mg(2+) as a cofactor. Co(2+) is required as a cofactor.

It catalyses the reaction (3S)-3-hydroxy-D-aspartate = glyoxylate + glycine. The enzyme catalyses (3R)-3-hydroxy-D-aspartate = glyoxylate + glycine. Functionally, catalyzes the condensation of glyoxylate and glycine into (2R,3S)-beta-hydroxyaspartate ((3S)-3-hydroxy-D-aspartate). Functions in glyoxylate assimilation via the beta-hydroxyaspartate cycle (BHAC). In vitro catalyzes the cleavage of both D-erythro- and D-threo-3-hydroxyaspartate to glycine and glyoxylate. Also acts on D-threonine, D-3-phenylserine and D-3-3,4-methylenedioxyphenylserine. This chain is 3-hydroxy-D-aspartate aldolase (dhaa), found in Paracoccus denitrificans.